Here is a 284-residue protein sequence, read N- to C-terminus: tRNA-splicing endonuclease (284 aa).

Catalysis depends on residues Y222, H229, and K257.

The protein belongs to the tRNA-intron endonuclease family. Archaeal long subfamily. In terms of assembly, homodimer.

It catalyses the reaction pretRNA = a 3'-half-tRNA molecule with a 5'-OH end + a 5'-half-tRNA molecule with a 2',3'-cyclic phosphate end + an intron with a 2',3'-cyclic phosphate and a 5'-hydroxyl terminus.. In terms of biological role, endonuclease that removes tRNA introns. Cleaves pre-tRNA at the 5'- and 3'-splice sites to release the intron. The products are an intron and two tRNA half-molecules bearing 2',3' cyclic phosphate and 5'-OH termini. Recognizes a pseudosymmetric substrate in which 2 bulged loops of 3 bases are separated by a stem of 4 bp. The protein is tRNA-splicing endonuclease of Picrophilus torridus (strain ATCC 700027 / DSM 9790 / JCM 10055 / NBRC 100828 / KAW 2/3).